The following is a 372-amino-acid chain: Envelope phospholipase OPG057 (372 aa).

A YPPL motif is present at residues 153–156 (YPPL). S-palmitoyl cysteine; by host attachment occurs at residues Cys185 and Cys186. The 28-residue stretch at 307–334 (FTIQNNTKLLIVDDEYVHITSANFDGTH) folds into the PLD phosphodiesterase domain.

It belongs to the orthopoxvirus OPG057 family. Interacts with protein OPG190. Post-translationally, palmitoylated. Attachment of the palmitate moiety is essential for correct intracellular targeting and protein function.

The protein resides in the virion membrane. The protein localises to the host Golgi apparatus. It is found in the host trans-Golgi network. It localises to the host endoplasmic reticulum membrane. It carries out the reaction a 1,2-diacyl-sn-glycero-3-phosphocholine + H2O = a 1,2-diacyl-sn-glycero-3-phosphate + choline + H(+). Major envelope protein that plays a role in the biogenesis of the viral double membrane and in egress of virus from the host cell. Produces the wrapped form of virus that is required for cell-to-cell spread. Acts as a lipase with broad specificity including phospholipase C, phospholipase A, and triacylglycerol lipase activities. This is Envelope phospholipase OPG057 (OPG057) from Cynomys gunnisoni (Gunnison's prairie dog).